Reading from the N-terminus, the 474-residue chain is Receptor-transporting protein 3 (474 aa).

The Cytoplasmic portion of the chain corresponds to 1 to 453 (MMEEDIGDTE…SCCEAACNCM (453 aa)). The 3CxxC-type zinc-finger motif lies at 53–164 (TFARFHCPSC…SSNCEACLLG (112 aa)). The segment at 175–304 (SKPPAPPLSP…ISCTSKPSTT (130 aa)) is disordered. 2 stretches are compositionally biased toward polar residues: residues 197-228 (VTCSNISSSRPSSKVQMPQASKVNPQASNPTK) and 259-304 (VTCS…PSTT). Residues 454–474 (SQSPLCCLAFLILFLLLWYLL) form a helical membrane-spanning segment.

Belongs to the TMEM7 family. In terms of assembly, interacts with TAS2R16. As to expression, expressed predominantly in the liver. Not detected in the olfactory epithelium.

Its subcellular location is the membrane. Its function is as follows. Promotes functional cell surface expression of the bitter taste receptors TAS2R16 and TAS2R43. The polypeptide is Receptor-transporting protein 3 (Rtp3) (Mus musculus (Mouse)).